The sequence spans 1055 residues: Bifunctional fucokinase/GDP-fucose pyrophosphorylase (1055 aa).

A GDP-fucose pyrophosphorylase region spans residues 34-565 (WDAIVLTAAS…SSQRVSLEEL (532 aa)). The interval 693 to 1055 (GKSHSENHIS…VKVYNWSICI (363 aa)) is L-fucokinase. 826-836 (PRGSGLGTSSI) lines the ATP pocket.

The protein belongs to the GHMP kinase family. Requires Mn(2+) as cofactor. Mg(2+) serves as cofactor. In terms of tissue distribution, ubiquitous. Highest expression in flower buds.

The enzyme catalyses L-fucose + ATP = beta-L-fucose 1-phosphate + ADP + H(+). The catalysed reaction is beta-L-fucose 1-phosphate + GTP + H(+) = GDP-beta-L-fucose + diphosphate. Its function is as follows. Bifunctional enzyme involved in the salvage pathway which converts free L-fucose to GDP-L-fucose. Catalyzes two successive reactions, the ATP-dependent phosphorylation of L-fucose to L-fucose 1-phosphate, and its guanylylation to GDP-L-fucose. The sugar-1-kinase activity has a strict substrate specificity for L-fucose and ATP. The pyrophosphorylase activity has a strict substrate specificity for L-fucose 1-phosphate and GTP. The protein is Bifunctional fucokinase/GDP-fucose pyrophosphorylase (FKGP) of Arabidopsis thaliana (Mouse-ear cress).